The sequence spans 1025 residues: Collagen alpha-1(VI) chain (1025 aa).

The signal sequence occupies residues 1-19; it reads MRLAHALLPLLLQACWVAT. The segment at 20–255 is N-terminal globular domain; the sequence is QDIQGSKAIA…CCSFECQAAR (236 aa). In terms of domain architecture, VWFA 1 spans 36-234; it reads DLFFVLDTSE…EVISQTIDTI (199 aa). Residue N211 is glycosylated (N-linked (GlcNAc...) asparagine). The tract at residues 252 to 588 is disordered; that stretch reads QAARGPPGPR…QGPPGHVGPP (337 aa). Positions 256-591 are triple-helical region; sequence GPPGPRGDPG…PGHVGPPGPD (336 aa). The short motif at 261–263 is the Cell attachment site element; that stretch reads RGD. Basic and acidic residues-rich tracts occupy residues 267–284 and 300–333; these read EGERGKPGLPGEKGEAGD and KGEKGSRGEKGSRGPKGYKGEKGKRGIDGVDGMK. 2 short sequence motifs (cell attachment site) span residues 441–443 and 477–479; these read RGD. 2 N-linked (GlcNAc...) asparagine glycosylation sites follow: N515 and N536. The span at 549-559 shows a compositional bias: acidic residues; that stretch reads GEVGDPGEDNN. The span at 578–588 shows a compositional bias: pro residues; the sequence is PQGPPGHVGPP. Positions 592–1025 are C-terminal globular domain; sequence ECEILDIIMK…QTVSRKVALG (434 aa). VWFA domains follow at residues 614–802 and 826–1018; these read DILF…LKNI and DITI…YQTV. N-linked (GlcNAc...) asparagine glycans are attached at residues N801 and N893.

The protein belongs to the type VI collagen family. In terms of assembly, trimers composed of three different chains: alpha-1(VI), alpha-2(VI), and alpha-3(VI) or alpha-4(VI) or alpha-5(VI) or alpha-6(VI). Prolines at the third position of the tripeptide repeating unit (G-X-Y) are hydroxylated in some or all of the chains.

Its subcellular location is the secreted. It localises to the extracellular space. The protein resides in the extracellular matrix. In terms of biological role, collagen VI acts as a cell-binding protein. This Mus musculus (Mouse) protein is Collagen alpha-1(VI) chain (Col6a1).